Consider the following 192-residue polypeptide: MLPLLLASSSAYRRELLSRLRLPFTCCSPDIDESHRPGESATALVKRLAEEKARALASSHPAHLIIGSDQVAVLGERIIGKPHTFEKARQQLLDASGASVTFLTGLALLNSQTGHCQVDCVPFTVNMRTLDSTRIERYLHAEQPYDCAGSFKAEGLGVSLFQSTAGSDATSLIGLPLIRLVDMLLAEGVETP.

Asp69 acts as the Proton acceptor in catalysis.

It belongs to the Maf family. YceF subfamily. A divalent metal cation serves as cofactor.

The protein resides in the cytoplasm. The enzyme catalyses N(7)-methyl-GTP + H2O = N(7)-methyl-GMP + diphosphate + H(+). Functionally, nucleoside triphosphate pyrophosphatase that hydrolyzes 7-methyl-GTP (m(7)GTP). May have a dual role in cell division arrest and in preventing the incorporation of modified nucleotides into cellular nucleic acids. The protein is 7-methyl-GTP pyrophosphatase of Pseudomonas fluorescens (strain ATCC BAA-477 / NRRL B-23932 / Pf-5).